The sequence spans 304 residues: Dihydroorotate dehydrogenase B (NAD(+)), catalytic subunit (304 aa).

FMN-binding positions include S21 and 45-46 (KA). Residues K45 and 69 to 73 (NAIGL) contribute to the substrate site. N99 and N127 together coordinate FMN. N127 contacts substrate. C130 functions as the Nucleophile in the catalytic mechanism. K165 and I191 together coordinate FMN. Residue 192 to 193 (NT) participates in substrate binding. FMN-binding positions include G217, 243–244 (GG), and 265–266 (GT).

It belongs to the dihydroorotate dehydrogenase family. Type 1 subfamily. In terms of assembly, heterotetramer of 2 PyrK and 2 PyrD type B subunits. FMN is required as a cofactor.

It is found in the cytoplasm. The enzyme catalyses (S)-dihydroorotate + NAD(+) = orotate + NADH + H(+). Its pathway is pyrimidine metabolism; UMP biosynthesis via de novo pathway; orotate from (S)-dihydroorotate (NAD(+) route): step 1/1. Its function is as follows. Catalyzes the conversion of dihydroorotate to orotate with NAD(+) as electron acceptor. This chain is Dihydroorotate dehydrogenase B (NAD(+)), catalytic subunit (pyrD), found in Listeria monocytogenes serotype 4a (strain HCC23).